A 492-amino-acid polypeptide reads, in one-letter code: Catalase isozyme 2 (492 aa).

Catalysis depends on residues His65 and Asn138. Tyr348 is a heme binding site.

The protein belongs to the catalase family. Homotetramer. It depends on heme as a cofactor.

It localises to the peroxisome. The enzyme catalyses 2 H2O2 = O2 + 2 H2O. Occurs in almost all aerobically respiring organisms and serves to protect cells from the toxic effects of hydrogen peroxide. In Gossypium hirsutum (Upland cotton), this protein is Catalase isozyme 2 (CAT2).